A 546-amino-acid polypeptide reads, in one-letter code: EH domain-containing protein 2 (546 aa).

2 consecutive EF-hand domains span residues 15-50 (EHQK…SKLS) and 51-84 (RQEL…VSLA). The EH domain occupies 16-94 (HQKIYKEWFN…QEGHEITSDL (79 aa)). Ca(2+) is bound by residues aspartate 28, aspartate 30, aspartate 32, arginine 34, aspartate 39, aspartate 62, and glutamate 73. The 237-residue stretch at 194 to 430 (FDAKPMVMLL…LLADLMDVPK (237 aa)) folds into the Dynamin-type G domain. The G1 motif stretch occupies residues 204–211 (GQYSTGKT). 204 to 211 (GQYSTGKT) is a GTP binding site. Positions 230 to 231 (EP) are G2 motif. The segment at 292–295 (DTPG) is G3 motif. GTP contacts are provided by residues 292–296 (DTPGV) and lysine 359. Residues 358-361 (NKAD) form a G4 motif region. A region of interest (G5 motif) is located at residue valine 382. A GTP-binding site is contributed by 395–398 (SFND). The Nuclear localization signal signature appears at 429–436 (PKKACDRK). Residues 467–490 (KSKAQQRLMDNLEEEFGKVQREFH) are a coiled coil.

Belongs to the TRAFAC class dynamin-like GTPase superfamily. Dynamin/Fzo/YdjA family. EHD subfamily. Homooligomer, and heterooligomer with EHD1. Interacts with AP-4 complex subunit sigma (At2g19790).

Its subcellular location is the endosome membrane. The protein resides in the cell membrane. The protein localises to the nucleus. It is found in the cytoplasm. It catalyses the reaction GTP + H2O = GDP + phosphate + H(+). In terms of biological role, involved in endocytosis negative regulation, probably by influencing actin organization. Acts in early endocytic membrane fusion and membrane trafficking of recycling endosomes. Exhibits an inhibitory effect on endocytosis when over-expressed. The protein is EH domain-containing protein 2 of Arabidopsis thaliana (Mouse-ear cress).